Consider the following 442-residue polypeptide: Adenylosuccinate synthetase (442 aa).

Residues 30–36 (GDEGKGK) and 58–60 (GHT) contribute to the GTP site. Catalysis depends on Asp-31, which acts as the Proton acceptor. Positions 31 and 58 each coordinate Mg(2+). Residues 31–34 (DEGK), 56–59 (NAGH), Thr-148, Arg-162, Asn-241, Thr-256, and Arg-320 contribute to the IMP site. His-59 (proton donor) is an active-site residue. Position 316-322 (316-322 (TTTGRRR)) interacts with substrate. Residues Arg-322, 348–350 (KLD), and 430–432 (GVG) contribute to the GTP site.

The protein belongs to the adenylosuccinate synthetase family. As to quaternary structure, homodimer. It depends on Mg(2+) as a cofactor.

It is found in the cytoplasm. It catalyses the reaction IMP + L-aspartate + GTP = N(6)-(1,2-dicarboxyethyl)-AMP + GDP + phosphate + 2 H(+). It functions in the pathway purine metabolism; AMP biosynthesis via de novo pathway; AMP from IMP: step 1/2. Plays an important role in the de novo pathway and in the salvage pathway of purine nucleotide biosynthesis. Catalyzes the first committed step in the biosynthesis of AMP from IMP. The protein is Adenylosuccinate synthetase of Trichoplax adhaerens (Trichoplax reptans).